The primary structure comprises 365 residues: Fucose-specific lectin (365 aa).

Residues 1-21 (MKLLHFTILLQVSLFPASSLA) form the signal peptide. Repeat copies occupy residues 22–79 (QAGG…NDTI), 80–141 (AKAR…NQYN), 142–206 (FQVA…RLAN), 207–261 (FGPA…VRTA), 262–309 (KPRT…DGAF), and 310–365 (EHSA…IPPA). The tract at residues 22 to 365 (QAGGNNTEVQ…RRGILAIPPA (344 aa)) is 6 X approximate tandem repeats. Asn26 carries N-linked (GlcNAc...) asparagine glycosylation. The beta-L-fucose site is built by Arg51, Glu63, and Trp70. N-linked (GlcNAc...) asparagine glycans are attached at residues Asn76 and Asn85. Position 111 (Arg111) interacts with beta-L-fucose. N-linked (GlcNAc...) asparagine glycosylation occurs at Asn118. The beta-L-fucose site is built by Glu123, Trp132, Arg164, Glu176, Trp201, and Arg231. Asn248 carries an N-linked (GlcNAc...) asparagine glycan. Beta-L-fucose-binding residues include Arg283, Arg333, and Glu347.

It belongs to the fungal fucose-specific lectin family. In terms of assembly, homodimer.

It is found in the secreted. Its function is as follows. Probable L-fucose-binding lectin. This Arthroderma benhamiae (strain ATCC MYA-4681 / CBS 112371) (Trichophyton mentagrophytes) protein is Fucose-specific lectin.